Here is a 404-residue protein sequence, read N- to C-terminus: Exodeoxyribonuclease 7 large subunit (404 aa).

This sequence belongs to the XseA family. Heterooligomer composed of large and small subunits.

The protein localises to the cytoplasm. The enzyme catalyses Exonucleolytic cleavage in either 5'- to 3'- or 3'- to 5'-direction to yield nucleoside 5'-phosphates.. Bidirectionally degrades single-stranded DNA into large acid-insoluble oligonucleotides, which are then degraded further into small acid-soluble oligonucleotides. The protein is Exodeoxyribonuclease 7 large subunit of Ruminiclostridium cellulolyticum (strain ATCC 35319 / DSM 5812 / JCM 6584 / H10) (Clostridium cellulolyticum).